The following is a 450-amino-acid chain: Homogentisate 1,2-dioxygenase (450 aa).

The active-site Proton acceptor is His-304. Fe cation is bound by residues His-347 and Glu-353. Homogentisate contacts are provided by Tyr-362 and His-383. Fe cation is bound at residue His-383.

It belongs to the homogentisate dioxygenase family. As to quaternary structure, hexamer; dimer of trimers. Requires Fe cation as cofactor.

It carries out the reaction homogentisate + O2 = 4-maleylacetoacetate + H(+). Its pathway is amino-acid degradation; L-phenylalanine degradation; acetoacetate and fumarate from L-phenylalanine: step 4/6. Involved in the catabolism of homogentisate (2,5-dihydroxyphenylacetate or 2,5-OH-PhAc), a central intermediate in the degradation of phenylalanine and tyrosine. Catalyzes the oxidative ring cleavage of the aromatic ring of homogentisate to yield maleylacetoacetate. The chain is Homogentisate 1,2-dioxygenase from Burkholderia thailandensis (strain ATCC 700388 / DSM 13276 / CCUG 48851 / CIP 106301 / E264).